Reading from the N-terminus, the 322-residue chain is MQYVGIQTQQSRNNLRSGILLILFPCLVAVLTYLFCYLLITFTVEDDYGQYNTLAMTNQMFINLIPYIIGGVLVWFIIAYFTNSSIIKAATGARPLERKENKRIYNLVENLCMSQGMKMPKINIIDDDSLNAYASGINEQTYTVTLSKGIIEKLNDEELEGVIAHELTHIRNHDVRLLIISIVFVGIFSMLAQIALRSVYYSSWTRSRNDKNNGAILILVLAMIVAAIGYFFATLMRFAISRKREYMADAGAAEMTKNPLALASALRKISADPDIEAVEREDVAQLFIQHPGKQAKSALSGLSGLFATHPPIEKRIAILEQF.

Helical transmembrane passes span 19–39 (ILLI…CYLL) and 61–81 (FINL…IAYF). His-165 contributes to the Zn(2+) binding site. Glu-166 is a catalytic residue. His-169 provides a ligand contact to Zn(2+). 2 helical membrane passes run 175-195 (VRLL…AQIA) and 216-236 (ILIL…ATLM). Glu-245 lines the Zn(2+) pocket.

Belongs to the peptidase M48B family. It depends on Zn(2+) as a cofactor.

Its subcellular location is the cell inner membrane. In Bacteroides fragilis (strain ATCC 25285 / DSM 2151 / CCUG 4856 / JCM 11019 / LMG 10263 / NCTC 9343 / Onslow / VPI 2553 / EN-2), this protein is Protease HtpX homolog.